The primary structure comprises 549 residues: Beta-hexosaminidase Amuc_0868 (549 aa).

Positions 1–28 (MISKCTFSATVFSLFSLCWGAPSSPVLE) are cleaved as a signal peptide. Residue Arg161 participates in substrate binding. Catalysis depends on charge relay system residues Asp190 and His260. Asp326 is a substrate binding site. The active-site Charge relay system is the Glu327. Substrate-binding positions include Trp393, 420 to 422 (YFD), and 474 to 476 (WTE). A disordered region spans residues 526–549 (GVNYKRPDNGAPAQPKAVITRERR).

It belongs to the glycosyl hydrolase 20 family.

It catalyses the reaction Hydrolysis of terminal non-reducing N-acetyl-D-hexosamine residues in N-acetyl-beta-D-hexosaminides.. Its activity is regulated as follows. Inhibited strongly by Cu(2+), Zn(2+), Cd(2+) and Ni(2+) ions. No effect on activity with Na(+), Li(+), K(+), Ca(2+), Mg(2+) or Mn(2+) ions. Functionally, potentially capable of cleaving the specific glycoside linkages in the process of mucin degradation in human intestinal tract. Hydrolyzes chromogenic substrates pNP-beta-GlcNAc with high activity and pNP-beta-GalNAc to a lesser extent, but not pNP-beta-glucose or pNP-beta-galactose. The chain is Beta-hexosaminidase Amuc_0868 from Akkermansia muciniphila (strain ATCC BAA-835 / DSM 22959 / JCM 33894 / BCRC 81048 / CCUG 64013 / CIP 107961 / Muc).